Reading from the N-terminus, the 479-residue chain is Transcriptional regulator ERG (479 aa).

Positions Thr34 to Met47 are enriched in polar residues. Disordered stretches follow at residues Thr34–Trp56 and Pro72–Lys92. 3 positions are modified to phosphoserine: Ser48, Ser81, and Ser96. The PNT domain maps to Met113–Pro199. The disordered stretch occupies residues Gln242 to Tyr293. Over residues Thr267 to Pro281 the composition is skewed to polar residues. A Glycyl lysine isopeptide (Lys-Gly) (interchain with G-Cter in SUMO2) cross-link involves residue Lys282. Positions Ile311–Asp391 form a DNA-binding region, ETS.

This sequence belongs to the ETS family. As to quaternary structure, identified in a IGF2BP1-dependent mRNP granule complex containing untranslated mRNAs. Interacts with SETDB1.

Its subcellular location is the nucleus. It is found in the cytoplasm. Transcriptional regulator. May participate in transcriptional regulation through the recruitment of SETDB1 histone methyltransferase and subsequent modification of local chromatin structure. This is Transcriptional regulator ERG (ERG) from Homo sapiens (Human).